The following is a 314-amino-acid chain: Acetyl-coenzyme A carboxylase carboxyl transferase subunit beta (314 aa).

Residues 25–294 form the CoA carboxyltransferase N-terminal domain; it reads VWTKCDSCSQ…PGTKPIVAEF (270 aa). The Zn(2+) site is built by Cys29, Cys32, Cys48, and Cys51. The C4-type zinc finger occupies 29–51; that stretch reads CDSCSQVLYRAELERNLEVCPKC.

Belongs to the AccD/PCCB family. In terms of assembly, acetyl-CoA carboxylase is a heterohexamer composed of biotin carboxyl carrier protein (AccB), biotin carboxylase (AccC) and two subunits each of ACCase subunit alpha (AccA) and ACCase subunit beta (AccD). It depends on Zn(2+) as a cofactor.

Its subcellular location is the cytoplasm. The catalysed reaction is N(6)-carboxybiotinyl-L-lysyl-[protein] + acetyl-CoA = N(6)-biotinyl-L-lysyl-[protein] + malonyl-CoA. Its pathway is lipid metabolism; malonyl-CoA biosynthesis; malonyl-CoA from acetyl-CoA: step 1/1. In terms of biological role, component of the acetyl coenzyme A carboxylase (ACC) complex. Biotin carboxylase (BC) catalyzes the carboxylation of biotin on its carrier protein (BCCP) and then the CO(2) group is transferred by the transcarboxylase to acetyl-CoA to form malonyl-CoA. The sequence is that of Acetyl-coenzyme A carboxylase carboxyl transferase subunit beta from Photorhabdus laumondii subsp. laumondii (strain DSM 15139 / CIP 105565 / TT01) (Photorhabdus luminescens subsp. laumondii).